The sequence spans 400 residues: Elongation factor Tu 2 (400 aa).

Residues 10–209 (KPHVNIGTIG…AVDEYIPTPQ (200 aa)) enclose the tr-type G domain. Residues 19-26 (GHVDHGKT) form a G1 region. Residue 19–26 (GHVDHGKT) coordinates GTP. Thr26 serves as a coordination point for Mg(2+). A G2 region spans residues 60–64 (GITIN). Residues 81 to 84 (DCPG) are G3. GTP is bound by residues 81–85 (DCPGH) and 136–139 (NKAD). The segment at 136–139 (NKAD) is G4. The interval 174–176 (SAL) is G5.

Belongs to the TRAFAC class translation factor GTPase superfamily. Classic translation factor GTPase family. EF-Tu/EF-1A subfamily. In terms of assembly, monomer.

The protein resides in the cytoplasm. The enzyme catalyses GTP + H2O = GDP + phosphate + H(+). In terms of biological role, GTP hydrolase that promotes the GTP-dependent binding of aminoacyl-tRNA to the A-site of ribosomes during protein biosynthesis. The sequence is that of Elongation factor Tu 2 from Pelotomaculum thermopropionicum (strain DSM 13744 / JCM 10971 / SI).